The following is a 370-amino-acid chain: MSFAPLQNDTFLRACRRQATDYTPLWLMRQAGRYLPEYKATRAKAGSFMGLATNVEYATEVTLQPLERFPLDAAILFSDILTVPDAMGLGLSFAEGEGPRFAKAVRDEADVAALAVPDLDKLRYVFDAVTSIRRALNGRVPLIGFSGSPWTLACYMVEGKGSDDYRLVKTLMYSRPDLMHRILAVNADAVAAYLNAQIDAGAQAVMVFDSWGGVLADGCFQQFSLEYTRRVLAQLKRTGVDGQDVPRIVFTKGGGIWLDDMKDIDCEVLGLDWTAHLGKARAIVGGQVGGPGKALQGNIDPNVLFAPPEAVAAQVRAVLDSFGTPHTDKTTTGPTHIFNLGHGISQFTPPEHVAALVEAVHGYSRSLRQR.

Substrate is bound by residues 29-33 (RQAGR), aspartate 79, tyrosine 155, serine 210, and histidine 342.

This sequence belongs to the uroporphyrinogen decarboxylase family. In terms of assembly, homodimer.

It is found in the cytoplasm. It carries out the reaction uroporphyrinogen III + 4 H(+) = coproporphyrinogen III + 4 CO2. It functions in the pathway porphyrin-containing compound metabolism; protoporphyrin-IX biosynthesis; coproporphyrinogen-III from 5-aminolevulinate: step 4/4. Functionally, catalyzes the decarboxylation of four acetate groups of uroporphyrinogen-III to yield coproporphyrinogen-III. In Acidovorax sp. (strain JS42), this protein is Uroporphyrinogen decarboxylase.